Here is a 232-residue protein sequence, read N- to C-terminus: Small ribosomal subunit protein uS2 (232 aa).

This sequence belongs to the universal ribosomal protein uS2 family.

This is Small ribosomal subunit protein uS2 from Pelotomaculum thermopropionicum (strain DSM 13744 / JCM 10971 / SI).